Consider the following 435-residue polypeptide: Cytochrome c biogenesis protein CcsB (435 aa).

Transmembrane regions (helical) follow at residues 11–31 (LRVAIFLLLIIALSSSLGTAL), 69–89 (SDWFLSLLLWLGIALVFCSWR), and 159–179 (VGPLMVHTGLVILMLGAVWGV).

It belongs to the Ccs1/CcsB family. In terms of assembly, may interact with CcsA.

Its subcellular location is the plastid. The protein localises to the organellar chromatophore thylakoid membrane. In terms of biological role, required during biogenesis of c-type cytochromes (cytochrome c6 and cytochrome f) at the step of heme attachment. The sequence is that of Cytochrome c biogenesis protein CcsB from Paulinella chromatophora.